The sequence spans 362 residues: 2-aminoethylphosphonate--pyruvate transaminase (362 aa).

N6-(pyridoxal phosphate)lysine is present on K193.

Belongs to the class-V pyridoxal-phosphate-dependent aminotransferase family. PhnW subfamily. In terms of assembly, homodimer. Pyridoxal 5'-phosphate serves as cofactor.

It catalyses the reaction (2-aminoethyl)phosphonate + pyruvate = phosphonoacetaldehyde + L-alanine. In terms of biological role, involved in phosphonate degradation. This chain is 2-aminoethylphosphonate--pyruvate transaminase, found in Bacteroides fragilis (strain YCH46).